The chain runs to 197 residues: uncharacterized protein (197 aa).

The next 4 membrane-spanning stretches (helical) occupy residues Trp30 to Ala50, Leu61 to Val81, Leu101 to Ala121, and Ile130 to Leu150.

It is found in the cell membrane. This is an uncharacterized protein from Mycobacterium tuberculosis (strain CDC 1551 / Oshkosh).